We begin with the raw amino-acid sequence, 464 residues long: Asparagine--tRNA ligase (464 aa).

The protein belongs to the class-II aminoacyl-tRNA synthetase family. As to quaternary structure, homodimer.

Its subcellular location is the cytoplasm. It catalyses the reaction tRNA(Asn) + L-asparagine + ATP = L-asparaginyl-tRNA(Asn) + AMP + diphosphate + H(+). This Xanthomonas axonopodis pv. citri (strain 306) protein is Asparagine--tRNA ligase.